A 624-amino-acid polypeptide reads, in one-letter code: Bifunctional protein ArgH (624 aa).

The interval 1 to 466 is argininosuccinate lyase; the sequence is MALWGGRFTQ…AARDTTLVKV (466 aa). One can recognise an N-acetyltransferase domain in the interval 464–614; the sequence is VKVRPARITD…DEVALEFNLS (151 aa). The probable acetyltransferase stretch occupies residues 467-624; the sequence is RPARITDIET…EQIISQVKVA (158 aa).

It in the N-terminal section; belongs to the lyase 1 family. Argininosuccinate lyase subfamily.

The protein localises to the cytoplasm. It carries out the reaction 2-(N(omega)-L-arginino)succinate = fumarate + L-arginine. The protein operates within amino-acid biosynthesis; L-arginine biosynthesis; L-arginine from L-ornithine and carbamoyl phosphate: step 3/3. This Vibrio vulnificus (strain CMCP6) protein is Bifunctional protein ArgH (argH).